Reading from the N-terminus, the 358-residue chain is Isopentenyl-diphosphate delta-isomerase (358 aa).

12–13 is a binding site for substrate; the sequence is RK. FMN-binding positions include 69 to 71, serine 99, and asparagine 128; that span reads AMT. Glutamine 158 is a substrate binding site. A Mg(2+)-binding site is contributed by glutamate 159. FMN contacts are provided by residues lysine 190, threonine 220, 267–269, and 288–289; these read GIR and AG.

The protein belongs to the IPP isomerase type 2 family. As to quaternary structure, homooctamer. Dimer of tetramers. FMN serves as cofactor. The cofactor is NADPH. Requires Mg(2+) as cofactor.

It is found in the cytoplasm. It carries out the reaction isopentenyl diphosphate = dimethylallyl diphosphate. In terms of biological role, involved in the biosynthesis of isoprenoids. Catalyzes the 1,3-allylic rearrangement of the homoallylic substrate isopentenyl (IPP) to its allylic isomer, dimethylallyl diphosphate (DMAPP). This chain is Isopentenyl-diphosphate delta-isomerase, found in Listeria innocua serovar 6a (strain ATCC BAA-680 / CLIP 11262).